We begin with the raw amino-acid sequence, 862 residues long: Aldehyde-alcohol dehydrogenase (862 aa).

C244 is a catalytic residue. 420–425 is a binding site for NAD(+); it reads GFWGGN.

This sequence in the N-terminal section; belongs to the aldehyde dehydrogenase family. In the C-terminal section; belongs to the iron-containing alcohol dehydrogenase family.

The enzyme catalyses a primary alcohol + NAD(+) = an aldehyde + NADH + H(+). It catalyses the reaction a secondary alcohol + NAD(+) = a ketone + NADH + H(+). The catalysed reaction is an aldehyde + NAD(+) + H2O = a carboxylate + NADH + 2 H(+). Functionally, has both aldehyde and alcohol dehydrogenase activities. Can use acetaldehyde, butyraldehyde, butanol and ethanol. The chain is Aldehyde-alcohol dehydrogenase from Clostridium acetobutylicum (strain ATCC 824 / DSM 792 / JCM 1419 / IAM 19013 / LMG 5710 / NBRC 13948 / NRRL B-527 / VKM B-1787 / 2291 / W).